A 539-amino-acid chain; its full sequence is GMP synthase [glutamine-hydrolyzing] (539 aa).

The Glutamine amidotransferase type-1 domain occupies 4 to 202 (KILILDFGSQ…VLGICRAKAD (199 aa)). Cys-81 serves as the catalytic Nucleophile. Catalysis depends on residues His-176 and Glu-178. The GMPS ATP-PPase domain occupies 203–395 (WVMKDHIEEA…LGLPPEMVYR (193 aa)). 230–236 (SGGVDSS) is a binding site for ATP.

As to quaternary structure, homodimer.

The catalysed reaction is XMP + L-glutamine + ATP + H2O = GMP + L-glutamate + AMP + diphosphate + 2 H(+). It functions in the pathway purine metabolism; GMP biosynthesis; GMP from XMP (L-Gln route): step 1/1. Its function is as follows. Catalyzes the synthesis of GMP from XMP. This chain is GMP synthase [glutamine-hydrolyzing], found in Cupriavidus pinatubonensis (strain JMP 134 / LMG 1197) (Cupriavidus necator (strain JMP 134)).